The sequence spans 99 residues: Protein translation factor SUI1 homolog (99 aa).

It belongs to the SUI1 family.

This Pyrococcus horikoshii (strain ATCC 700860 / DSM 12428 / JCM 9974 / NBRC 100139 / OT-3) protein is Protein translation factor SUI1 homolog.